A 185-amino-acid chain; its full sequence is Pyruvate/ketoisovalerate oxidoreductases common subunit gamma (185 aa).

Heterotetramer of one alpha, one beta, one delta and one gamma chain.

It catalyses the reaction 2 oxidized [2Fe-2S]-[ferredoxin] + pyruvate + CoA = 2 reduced [2Fe-2S]-[ferredoxin] + acetyl-CoA + CO2 + H(+). The enzyme catalyses 3-methyl-2-oxobutanoate + 2 oxidized [2Fe-2S]-[ferredoxin] + CoA = 2-methylpropanoyl-CoA + 2 reduced [2Fe-2S]-[ferredoxin] + CO2 + H(+). The chain is Pyruvate/ketoisovalerate oxidoreductases common subunit gamma (porG) from Pyrococcus furiosus (strain ATCC 43587 / DSM 3638 / JCM 8422 / Vc1).